The sequence spans 885 residues: DNA replication licensing factor REC (885 aa).

The interval 36-76 (RVIPAGGNRQPNQGEPGAPDAPSVPPATRQPRGWSRTAGKR) is disordered. The C4-type zinc-finger motif lies at 281 to 308 (CSRCQMEIAMRQRGTFQPRPYQCKRSEC). The 198-residue stretch at 430–627 (SFKLLVQSIA…ERDMSLTAHV (198 aa)) folds into the MCM domain. 473 to 480 (GDPGIGKT) serves as a coordination point for ATP. Over residues 796–805 (SLKEGSSRQG) the composition is skewed to polar residues. Residues 796–818 (SLKEGSSRQGTRGGGGAGGGAGK) are disordered. Residues 806–817 (TRGGGGAGGGAG) show a composition bias toward gly residues.

The protein belongs to the MCM family.

The protein resides in the nucleus. In terms of biological role, required for meiotic DNA recombination in females. Probably not involved in DNA repair and recombination in somatic cells. The polypeptide is DNA replication licensing factor REC (rec) (Drosophila melanogaster (Fruit fly)).